The following is a 412-amino-acid chain: Argininosuccinate synthase (412 aa).

Residues 15-23 and Ala42 contribute to the ATP site; that span reads AYSGGLDTS. L-citrulline-binding residues include Tyr93 and Ser98. Gly123 contributes to the ATP binding site. 3 residues coordinate L-aspartate: Thr125, Asn129, and Asp130. Asn129 serves as a coordination point for L-citrulline. Residues Arg133, Ser185, Ser194, Glu270, and Tyr282 each coordinate L-citrulline.

Belongs to the argininosuccinate synthase family. Type 1 subfamily. As to quaternary structure, homotetramer.

Its subcellular location is the cytoplasm. The enzyme catalyses L-citrulline + L-aspartate + ATP = 2-(N(omega)-L-arginino)succinate + AMP + diphosphate + H(+). It functions in the pathway amino-acid biosynthesis; L-arginine biosynthesis; L-arginine from L-ornithine and carbamoyl phosphate: step 2/3. The chain is Argininosuccinate synthase from Psychrobacter cryohalolentis (strain ATCC BAA-1226 / DSM 17306 / VKM B-2378 / K5).